Reading from the N-terminus, the 98-residue chain is C-X-C motif chemokine 10 (98 aa).

The signal sequence occupies residues 1–21 (MNPSAAVIFCLILLGLSGTQG). The residue at position 26 (Arg-26) is a Citrulline. Intrachain disulfides connect Cys-30–Cys-57 and Cys-32–Cys-74.

This sequence belongs to the intercrine alpha (chemokine CxC) family. In terms of assembly, monomer, dimer, and tetramer. Interacts with CXCR3 (via N-terminus). As to expression, expressed in the spleen, thymus, lymph nodes and liver. Expressed in astrocytes, microglia, and neurons.

The protein resides in the secreted. Its function is as follows. Pro-inflammatory cytokine that is involved in a wide variety of processes such as chemotaxis, differentiation, and activation of peripheral immune cells, regulation of cell growth, apoptosis and modulation of angiostatic effects. Plays thereby an important role during viral infections by stimulating the activation and migration of immune cells to the infected sites. Mechanistically, binding of CXCL10 to the CXCR3 receptor activates G protein-mediated signaling and results in downstream activation of phospholipase C-dependent pathway, an increase in intracellular calcium production and actin reorganization. In turn, recruitment of activated Th1 lymphocytes occurs at sites of inflammation. Activation of the CXCL10/CXCR3 axis also plays an important role in neurons in response to brain injury for activating microglia, the resident macrophage population of the central nervous system, and directing them to the lesion site. This recruitment is an essential element for neuronal reorganization. This Mus musculus (Mouse) protein is C-X-C motif chemokine 10 (Cxcl10).